Here is a 101-residue protein sequence, read N- to C-terminus: NAD(P)H-quinone oxidoreductase subunit 4L, chloroplastic (101 aa).

3 helical membrane-spanning segments follow: residues 2–22 (MLEY…YGLI), 32–52 (MCLE…SDFF), and 61–81 (ILSI…PAIV).

Belongs to the complex I subunit 4L family. NDH is composed of at least 16 different subunits, 5 of which are encoded in the nucleus.

The protein resides in the plastid. It localises to the chloroplast thylakoid membrane. The catalysed reaction is a plastoquinone + NADH + (n+1) H(+)(in) = a plastoquinol + NAD(+) + n H(+)(out). The enzyme catalyses a plastoquinone + NADPH + (n+1) H(+)(in) = a plastoquinol + NADP(+) + n H(+)(out). NDH shuttles electrons from NAD(P)H:plastoquinone, via FMN and iron-sulfur (Fe-S) centers, to quinones in the photosynthetic chain and possibly in a chloroplast respiratory chain. The immediate electron acceptor for the enzyme in this species is believed to be plastoquinone. Couples the redox reaction to proton translocation, and thus conserves the redox energy in a proton gradient. The sequence is that of NAD(P)H-quinone oxidoreductase subunit 4L, chloroplastic from Populus alba (White poplar).